Consider the following 448-residue polypeptide: Glutamyl-tRNA(Gln) amidotransferase subunit D (448 aa).

Residues 92 to 423 enclose the Asparaginase/glutaminase domain; it reads SEVKIISTGG…DKIRSLMLTN (332 aa). Catalysis depends on residues T102, T178, D179, and K257.

Belongs to the asparaginase 1 family. GatD subfamily. In terms of assembly, heterodimer of GatD and GatE.

It carries out the reaction L-glutamyl-tRNA(Gln) + L-glutamine + ATP + H2O = L-glutaminyl-tRNA(Gln) + L-glutamate + ADP + phosphate + H(+). Allows the formation of correctly charged Gln-tRNA(Gln) through the transamidation of misacylated Glu-tRNA(Gln) in organisms which lack glutaminyl-tRNA synthetase. The reaction takes place in the presence of glutamine and ATP through an activated gamma-phospho-Glu-tRNA(Gln). The GatDE system is specific for glutamate and does not act on aspartate. The protein is Glutamyl-tRNA(Gln) amidotransferase subunit D of Sulfurisphaera tokodaii (strain DSM 16993 / JCM 10545 / NBRC 100140 / 7) (Sulfolobus tokodaii).